The sequence spans 609 residues: UvrABC system protein C (609 aa).

In terms of domain architecture, GIY-YIG spans 16–94 (HLPGVYRHLD…IKSLRPRYNI (79 aa)). The region spanning 203–238 (REVMDEIEARMLQASTELRFEEAAVLRDQMGSLSKV) is the UVR domain.

It belongs to the UvrC family. Interacts with UvrB in an incision complex.

It is found in the cytoplasm. Its function is as follows. The UvrABC repair system catalyzes the recognition and processing of DNA lesions. UvrC both incises the 5' and 3' sides of the lesion. The N-terminal half is responsible for the 3' incision and the C-terminal half is responsible for the 5' incision. The chain is UvrABC system protein C from Bordetella pertussis (strain Tohama I / ATCC BAA-589 / NCTC 13251).